We begin with the raw amino-acid sequence, 486 residues long: Glutamyl-tRNA(Gln) amidotransferase subunit A (486 aa).

Active-site charge relay system residues include K79 and S154. Residue S178 is the Acyl-ester intermediate of the active site.

Belongs to the amidase family. GatA subfamily. Heterotrimer of A, B and C subunits.

It catalyses the reaction L-glutamyl-tRNA(Gln) + L-glutamine + ATP + H2O = L-glutaminyl-tRNA(Gln) + L-glutamate + ADP + phosphate + H(+). Allows the formation of correctly charged Gln-tRNA(Gln) through the transamidation of misacylated Glu-tRNA(Gln) in organisms which lack glutaminyl-tRNA synthetase. The reaction takes place in the presence of glutamine and ATP through an activated gamma-phospho-Glu-tRNA(Gln). The sequence is that of Glutamyl-tRNA(Gln) amidotransferase subunit A from Dehalococcoides mccartyi (strain ATCC BAA-2266 / KCTC 15142 / 195) (Dehalococcoides ethenogenes (strain 195)).